The sequence spans 265 residues: MHYELHGRMEPDAPTLVLSSGLGGAAAFWLPQLPALTQDYRVLVYDQLGTNKSPANLPAGYSIESMAVELLELLDTLGIRRCHFIGHALGGLVGLQIALLRPQLLQSLVPINAWSSPNPHSARCFAVRLKLLHDSGPAAYVQAQSLFLYPADWIAANSERLARDDAHALAHFPPTMNLVRRIEALLAFDIEAELPRITTPTLLIANRDDMLVPWQRSQHLADNMPNAQLALLNYGGHASSVSDSEPFNQILLDHLAEQCGQVAAA.

The 110-residue stretch at proline 14–arginine 123 folds into the AB hydrolase-1 domain.

Belongs to the AB hydrolase superfamily. Hydrolase RutD family.

It catalyses the reaction carbamate + 2 H(+) = NH4(+) + CO2. Functionally, involved in pyrimidine catabolism. May facilitate the hydrolysis of carbamate, a reaction that can also occur spontaneously. This chain is Putative carbamate hydrolase RutD, found in Stutzerimonas stutzeri (strain A1501) (Pseudomonas stutzeri).